A 122-amino-acid chain; its full sequence is UPF0102 protein Dred_2035 (122 aa).

This sequence belongs to the UPF0102 family.

The protein is UPF0102 protein Dred_2035 of Desulforamulus reducens (strain ATCC BAA-1160 / DSM 100696 / MI-1) (Desulfotomaculum reducens).